Consider the following 188-residue polypeptide: UPF0301 protein Smlt1098 (188 aa).

This sequence belongs to the UPF0301 (AlgH) family.

This Stenotrophomonas maltophilia (strain K279a) protein is UPF0301 protein Smlt1098.